The sequence spans 354 residues: Probable L-ascorbate-6-phosphate lactonase UlaG (354 aa).

The protein belongs to the UlaG family. Requires a divalent metal cation as cofactor.

The protein localises to the cytoplasm. The enzyme catalyses L-ascorbate 6-phosphate + H2O = 3-dehydro-L-gulonate 6-phosphate. Its pathway is cofactor degradation; L-ascorbate degradation; D-xylulose 5-phosphate from L-ascorbate: step 1/4. Functionally, probably catalyzes the hydrolysis of L-ascorbate-6-P into 3-keto-L-gulonate-6-P. Is essential for L-ascorbate utilization under anaerobic conditions. This is Probable L-ascorbate-6-phosphate lactonase UlaG from Escherichia fergusonii (strain ATCC 35469 / DSM 13698 / CCUG 18766 / IAM 14443 / JCM 21226 / LMG 7866 / NBRC 102419 / NCTC 12128 / CDC 0568-73).